The sequence spans 332 residues: Trans-2'-carboxybenzalpyruvate hydratase-aldolase (332 aa).

The active-site Schiff-base intermediate with substrate is the K178.

It belongs to the DapA family. As to quaternary structure, homotrimer.

The catalysed reaction is (3Z)-4-(2-carboxyphenyl)-2-oxobut-3-enoate + H2O = 2-formylbenzoate + pyruvate. With respect to regulation, not inhibited by sodium borohydride or sodium pyruvate. Unaffected by EDTA, EGTA, Mn(2+), Mg(2+) and Ca(2+). Functionally, plays a role in phenanthrene catabolism. Catalyzes the transformation of trans-2'-carboxbenzalpyruvate to 2-formylbenzoate and pyruvate. The polypeptide is Trans-2'-carboxybenzalpyruvate hydratase-aldolase (Nocardioides sp. (strain KP7)).